We begin with the raw amino-acid sequence, 1004 residues long: MPSKFSCRKLRETGQRFESFLAERGLDLETDRERLRTIYNHDFKPSYGTPAPGFSSMLYGMKIANLAFVTKTRVRFFKLDRWADVQLPEKRRIKPGSNISKQHRSLLARIFHDRAEYLHGKHGVDVEVQGPHEARDGQLLIHLDLNRKEVLTLRLRNGGSKPVTLTHLFPLCWTPQFVFYHGEQDLPCPLGPGESYELHIYCKTSIVGYFPATVLWELLGPGESGAEGAETFYIARFLAAVAHSPLAAQLKPTTPFKRPPRLTRNSVLTNRIEEGERPDRAKGYELELSLALGTYYPPILLRQLLPTLLQGPSIFTAPKEVAEIKAQLETTLKSRNYEVKLRLLLHLEELQMEHDIRHYDLDSVPMTWDPVDQNPRLLTLEVPGVAESRPSVLRGDHLFALLSSETQQDDPVTYKGFVHKVELDRVKLSFSTSLLSRFVDGLTFKVNFTFNRQPLRVQHRALELTGRWVLWPMLFPVASRGVSLLPSDVKFKLYDRSLESNPEQLQAMKHIVRGTTRPAPYIIFGPPGTGKTVTLVEAIKQVVKHLPKAHILACAPSNSGADLLCQRLRVHLPSSIYRLLAPSRDIRMVPEDIKTCCNWDAKKGEYVYPAKKHLQQYRVLITTLITASRLVSAQFPIDHFTHIFIDEAGHCMEPESLVAIAGLMDVKETGNPGGQLVLAGDPRQLGPVLRSPLALKHGLGYSLLERLLAYNSLYKKGPNGYDPQFITKLLRNYRSHPTILDIPNQLYYDGELQACADVVDRERFCRWEGLPQQGFPIIFHGVMGKDEREGNSPSFFNPEEAATVTSYLKQLLAPSSKKGKARLSPRNVGVISPYRKQVEKIRYCITKLDRELRGLDDIKDLKVGSVEEFQGQERSVILISTVRSSQSFVQLDLDFNLGFLKNPKRFNVAVTRAKALLIVVGNPLLLGHDPDWKTFLEFCKENGGYTGCPFPAKLDLQQGQDLLQGLSKLSPSTSGPRRHQNLPQEREGEGGLPLQVEPEWRNEL.

K148 carries the post-translational modification N6-acetyllysine. T254 carries the phosphothreonine modification. At S433 the chain carries Phosphoserine. An ATP-binding site is contributed by 525–532 (GPPGTGKT). Residues 646–649 (DEAG) carry the DEAG box motif. The segment at 922–966 (NPLLLGHDPDWKTFLEFCKENGGYTGCPFPAKLDLQQGQDLLQGL) is interaction with AGO2 and APOBEC3G. Residues 966 to 1004 (LSKLSPSTSGPRRHQNLPQEREGEGGLPLQVEPEWRNEL) form a disordered region. The residue at position 970 (S970) is a Phosphoserine.

It belongs to the DNA2/NAM7 helicase family. SDE3 subfamily. As to quaternary structure, interacts with DICER1, AGO2, TARBP2, EIF6 and RPL7A (60S ribosome subunit); they form a large RNA-induced silencing complex (RISC). Interacts with APOBEC3G in an RNA-dependent manner. Interacts with TRIM71 (via NHL repeats) in an RNA-dependent manner. Interacts with both protein products of LIRE1, ORF1p and ORF2p. Interacts with TUT4 and, to a lesser extent, TUT7; the interactions are RNA-dependent. Interacts with AGO2, TNRC6B and UPF1; the interactions are direct and RNA-dependent. Interacts with FMR1; this interaction is direct, occurs in an RNA-dependent manner on polysomes and induces association of MOV10 with RNAs. Interacts with SHFL; the interaction increases in presence of RNA. Interacts with DHX34; the interaction is RNA-independent. Interacts with RBM46. In terms of processing, ubiquitinated by the DCX(DCAF12) complex that specifically recognizes the glutamate-leucine (Glu-Leu) degron at the C-terminus, leading to its degradation.

Its subcellular location is the cytoplasm. The protein resides in the P-body. It localises to the nucleus. The protein localises to the cytoplasmic ribonucleoprotein granule. It is found in the stress granule. It carries out the reaction ATP + H2O = ADP + phosphate + H(+). In terms of biological role, 5' to 3' RNA helicase that is involved in a number of cellular roles ranging from mRNA metabolism and translation, modulation of viral infectivity, inhibition of retrotransposition, or regulation of synaptic transmission. Plays an important role in innate antiviral immunity by promoting type I interferon production. Mechanistically, specifically uses IKKepsilon/IKBKE as the mediator kinase for IRF3 activation. Contributes to UPF1 mRNA target degradation by translocation along 3' UTRs. Required for microRNA (miRNA)-mediated gene silencing by the RNA-induced silencing complex (RISC). Required for both miRNA-mediated translational repression and miRNA-mediated cleavage of complementary mRNAs by RISC. In cooperation with FMR1, regulates miRNA-mediated translational repression by AGO2. Restricts retrotransposition of long interspersed element-1 (LINE-1) in cooperation with TUT4 and TUT7 counteracting the RNA chaperonne activity of L1RE1. Facilitates LINE-1 uridylation by TUT4 and TUT7. Required for embryonic viability and for normal central nervous system development and function. Plays two critical roles in early brain development: suppresses retroelements in the nucleus by directly inhibiting cDNA synthesis, while regulates cytoskeletal mRNAs to influence neurite outgrowth in the cytosol. May function as a messenger ribonucleoprotein (mRNP) clearance factor. This Mus musculus (Mouse) protein is Putative helicase MOV-10 (Mov10).